The sequence spans 31 residues: MSDIN-like toxin proprotein 8 (31 aa).

Residues 1-10 (MSDINTARLP) constitute a propeptide that is removed on maturation. Positions 11–18 (CIGFLGIP) form a cross-link, cyclopeptide (Cys-Pro). Residues 19 to 31 (SVGDDIEMVLRHG) constitute a propeptide that is removed on maturation.

The protein belongs to the MSDIN fungal toxin family. Post-translationally, processed by the macrocyclase-peptidase enzyme POPB to yield a toxic cyclic octapeptide. POPB first removes 10 residues from the N-terminus. Conformational trapping of the remaining peptide forces the enzyme to release this intermediate rather than proceed to macrocyclization. The enzyme rebinds the remaining peptide in a different conformation and catalyzes macrocyclization of the N-terminal 8 residues.

Functionally, probable toxin that belongs to the MSDIN-like toxin family responsible for a large number of food poisoning cases and deaths. The polypeptide is MSDIN-like toxin proprotein 8 (Amanita bisporigera (Destroying angel)).